The chain runs to 91 residues: Non-specific lipid-transfer protein P3 (91 aa).

4 disulfides stabilise this stretch: cysteine 3/cysteine 50, cysteine 13/cysteine 27, cysteine 28/cysteine 73, and cysteine 48/cysteine 87.

The protein localises to the secreted. Its function is as follows. Plant non-specific lipid-transfer proteins transfer phospholipids as well as galactolipids across membranes. May play a role in wax or cutin deposition in the cell walls of expanding epidermal cells and certain secretory tissues. This is Non-specific lipid-transfer protein P3 from Vitis sp. (Grape).